Consider the following 317-residue polypeptide: Beta-ketoacyl-[acyl-carrier-protein] synthase III (317 aa).

Residues Cys112 and His244 contribute to the active site. The ACP-binding stretch occupies residues 245 to 249 (QANIR). Asn274 is an active-site residue.

This sequence belongs to the thiolase-like superfamily. FabH family. As to quaternary structure, homodimer.

It localises to the cytoplasm. It catalyses the reaction malonyl-[ACP] + acetyl-CoA + H(+) = 3-oxobutanoyl-[ACP] + CO2 + CoA. Its pathway is lipid metabolism; fatty acid biosynthesis. In terms of biological role, catalyzes the condensation reaction of fatty acid synthesis by the addition to an acyl acceptor of two carbons from malonyl-ACP. Catalyzes the first condensation reaction which initiates fatty acid synthesis and may therefore play a role in governing the total rate of fatty acid production. Possesses both acetoacetyl-ACP synthase and acetyl transacylase activities. Its substrate specificity determines the biosynthesis of branched-chain and/or straight-chain of fatty acids. The chain is Beta-ketoacyl-[acyl-carrier-protein] synthase III from Rickettsia massiliae (strain Mtu5).